A 357-amino-acid chain; its full sequence is MPEPGPDAAGTASAQPQPPPPPPPAPKESPFSIKNLLNGDHHRPPPKPQPPPRTLFAPASAAAAAAAAAAAAAKGALEGAAGFALSQVGDLAFPRFEIPAQRFALPAHYLERSPAWWYPYTLTPAGGHLPRPEASEKALLRDSSPASGTDRDSPEPLLKADPDHKELDSKSPDEIILEESDSEESKKEGEAAPGAAGASVGAAAATPGAEDWKKGAESPEKKPACRKKKTRTVFSRSQVFQLESTFDMKRYLSSSERAGLAASLHLTETQVKIWFQNRRNKWKRQLAAELEAANLSHAAAQRIVRVPILYHENSAAEGAAAAAAGAPVPVSQPLLTFPHPVYYSHPVVSSVPLLRPV.

Disordered stretches follow at residues 1–58 (MPEP…LFAP) and 129–229 (LPRP…RKKK). A compositionally biased stretch (pro residues) spans 16 to 27 (PQPPPPPPPAPK). Composition is skewed to basic and acidic residues over residues 130–140 (PRPEASEKALL) and 149–173 (TDRD…KSPD). Phosphoserine is present on residues Ser153 and Ser180. The segment covering 191–209 (AAPGAAGASVGAAAATPGA) has biased composition (low complexity). Over residues 210–223 (EDWKKGAESPEKKP) the composition is skewed to basic and acidic residues. Positions 227–286 (KKKTRTVFSRSQVFQLESTFDMKRYLSSSERAGLAASLHLTETQVKIWFQNRRNKWKRQL) form a DNA-binding region, homeobox.

This sequence belongs to the HMX homeobox family.

The protein localises to the nucleus. Its function is as follows. Transcription factor involved in specification of neuronal cell types and which is required for inner ear and hypothalamus development. Binds to the 5'-CAAGTG-3' core sequence. Controls semicircular canal formation in the inner ear. Also required for hypothalamic/pituitary axis of the CNS. The chain is Homeobox protein HMX3 (HMX3) from Homo sapiens (Human).